A 207-amino-acid chain; its full sequence is MDKEKGLLIVLSGPSGVGKGTVRKKIFEDPTTSYKYSISMTTRHMREGEIDGVDYFFKTKEEFEALIKDDQFIEYAQYVGNYYGTPVQYVKDTMEEGHDVFLEIEVEGAKQVRKKFPDALFIFLAPPSLDDLKERLVGRGTESDEKIQSRVNEARKEVEMMNLYDYVVVNDEVELAKNRIQSIVEAEHLKRERIEAKYRKMLLEVKK.

One can recognise a Guanylate kinase-like domain in the interval 6–185 (GLLIVLSGPS…AKNRIQSIVE (180 aa)). ATP is bound at residue 13–20 (GPSGVGKG).

The protein belongs to the guanylate kinase family.

The protein localises to the cytoplasm. It carries out the reaction GMP + ATP = GDP + ADP. Its function is as follows. Essential for recycling GMP and indirectly, cGMP. The polypeptide is Guanylate kinase (Staphylococcus epidermidis (strain ATCC 12228 / FDA PCI 1200)).